Reading from the N-terminus, the 427-residue chain is Heterogeneous nuclear ribonucleoprotein K (427 aa).

The tract at residues 1–34 is disordered; it reads METEQQEETFTNTETNGKRPAEDMEEEQAFKRSR. Positions 16-34 are enriched in basic and acidic residues; that stretch reads NGKRPAEDMEEEQAFKRSR. KH domains follow at residues 39-101 and 117-182; these read MVEL…LKKI and DCEL…IKII. 2 consecutive repeat copies span residues 51-73 and 56-59. Positions 51-385 are 2 X 22 AA approximate repeats; that stretch reads AGAVIGKGGK…QIRHESGASI (335 aa). The interval 56–371 is 5 X 4 AA repeats of G-X-G-G; that stretch reads GKGGKNIKAL…LAGSIIGKGG (316 aa). The interval 209–246 is RNA-binding RGG-box; that stretch reads YGGFTMMFDDRRGRPVGFPMRGRGGFDRMPPNRGGRPM. Tandem repeats lie at residues 218–223, 230–233, and 240–243. A 2 X 6 AA approximate repeats region spans residues 218–302; sequence DRRGRPVGFP…LMSYDRRGRP (85 aa). Residues 221 to 305 are disordered; it reads GRPVGFPMRG…YDRRGRPGDR (85 aa). A compositionally biased stretch (basic and acidic residues) spans 249-258; that stretch reads SRRDYDDMSP. 4 repeat units span residues 268-271, 297-302, 363-385, and 368-371. A compositionally biased stretch (basic and acidic residues) spans 295-305; the sequence is SYDRRGRPGDR. The 65-residue stretch at 351–415 folds into the KH 3 domain; it reads IITTQVTIPK…DQIQNAQYLL (65 aa).

The protein resides in the cytoplasm. It localises to the nucleus. Its subcellular location is the nucleoplasm. Its function is as follows. One of the major pre-mRNA-binding proteins. Binds tenaciously to poly(C) sequences. Likely to play a role in the nuclear metabolism of hnRNAs, particularly for pre-mRNAs that contain cytidine-rich sequences. Can also bind poly(C) single-stranded DNA. May play an important role in p53/TP53 response to DNA damage, acting at the level of both transcription activation and repression. As part of a ribonucleoprotein complex, may negatively regulate the transcription of genes involved in neuronal differentiation. The polypeptide is Heterogeneous nuclear ribonucleoprotein K (HNRNPK) (Gallus gallus (Chicken)).